The sequence spans 399 residues: Cell division protein DivIB (399 aa).

Disordered stretches follow at residues methionine 1 to glutamine 23 and glutamate 35 to glutamate 119. The Cytoplasmic portion of the chain corresponds to methionine 1–arginine 133. 2 stretches are compositionally biased toward basic and acidic residues: residues glutamate 35 to glutamine 65 and glutamate 75 to glutamate 119. A helical transmembrane segment spans residues alanine 134–proline 154. The Extracellular segment spans residues tyrosine 155–arginine 399. Positions alanine 156–tyrosine 226 constitute a POTRA domain. The segment covering lysine 364–asparagine 388 has biased composition (basic and acidic residues). The disordered stretch occupies residues lysine 364–arginine 399. Residues arginine 389–arginine 399 are compositionally biased toward polar residues.

Belongs to the FtsQ/DivIB family. DivIB subfamily.

Its subcellular location is the cell membrane. Its function is as follows. Cell division protein that may be involved in stabilizing or promoting the assembly of the division complex. The protein is Cell division protein DivIB of Streptococcus pneumoniae serotype 4 (strain ATCC BAA-334 / TIGR4).